The sequence spans 101 residues: Large ribosomal subunit protein uL24 (101 aa).

It belongs to the universal ribosomal protein uL24 family. Part of the 50S ribosomal subunit.

Its function is as follows. One of two assembly initiator proteins, it binds directly to the 5'-end of the 23S rRNA, where it nucleates assembly of the 50S subunit. One of the proteins that surrounds the polypeptide exit tunnel on the outside of the subunit. This is Large ribosomal subunit protein uL24 from Streptococcus uberis (strain ATCC BAA-854 / 0140J).